Consider the following 141-residue polypeptide: uncharacterized protein (141 aa).

A helical transmembrane segment spans residues 114–134; sequence ILFTCYIQSFSLLISNFFIAI.

The protein resides in the membrane. This is an uncharacterized protein from Schizosaccharomyces pombe (strain 972 / ATCC 24843) (Fission yeast).